Consider the following 453-residue polypeptide: Glutamyl-tRNA(Gln) amidotransferase subunit A (453 aa).

Catalysis depends on charge relay system residues lysine 53 and serine 128. Serine 152 acts as the Acyl-ester intermediate in catalysis.

It belongs to the amidase family. GatA subfamily. In terms of assembly, heterotrimer of A, B and C subunits.

The catalysed reaction is L-glutamyl-tRNA(Gln) + L-glutamine + ATP + H2O = L-glutaminyl-tRNA(Gln) + L-glutamate + ADP + phosphate + H(+). Its function is as follows. Allows the formation of correctly charged Gln-tRNA(Gln) through the transamidation of misacylated Glu-tRNA(Gln) in organisms which lack glutaminyl-tRNA synthetase. The reaction takes place in the presence of glutamine and ATP through an activated gamma-phospho-Glu-tRNA(Gln). This chain is Glutamyl-tRNA(Gln) amidotransferase subunit A, found in Helicobacter pylori (strain P12).